We begin with the raw amino-acid sequence, 557 residues long: Dihydroxy-acid dehydratase (557 aa).

Cys-49 lines the [2Fe-2S] cluster pocket. Asp-81 is a binding site for Mg(2+). Cys-122 serves as a coordination point for [2Fe-2S] cluster. Positions 123 and 124 each coordinate Mg(2+). At Lys-124 the chain carries N6-carboxylysine. Cys-194 is a binding site for [2Fe-2S] cluster. Glu-446 contacts Mg(2+). The active-site Proton acceptor is Ser-472.

It belongs to the IlvD/Edd family. Homodimer. It depends on [2Fe-2S] cluster as a cofactor. The cofactor is Mg(2+).

The enzyme catalyses (2R)-2,3-dihydroxy-3-methylbutanoate = 3-methyl-2-oxobutanoate + H2O. It carries out the reaction (2R,3R)-2,3-dihydroxy-3-methylpentanoate = (S)-3-methyl-2-oxopentanoate + H2O. It participates in amino-acid biosynthesis; L-isoleucine biosynthesis; L-isoleucine from 2-oxobutanoate: step 3/4. Its pathway is amino-acid biosynthesis; L-valine biosynthesis; L-valine from pyruvate: step 3/4. Its function is as follows. Functions in the biosynthesis of branched-chain amino acids. Catalyzes the dehydration of (2R,3R)-2,3-dihydroxy-3-methylpentanoate (2,3-dihydroxy-3-methylvalerate) into 2-oxo-3-methylpentanoate (2-oxo-3-methylvalerate) and of (2R)-2,3-dihydroxy-3-methylbutanoate (2,3-dihydroxyisovalerate) into 2-oxo-3-methylbutanoate (2-oxoisovalerate), the penultimate precursor to L-isoleucine and L-valine, respectively. This chain is Dihydroxy-acid dehydratase, found in Prochlorococcus marinus (strain MIT 9312).